A 187-amino-acid polypeptide reads, in one-letter code: Protein GrpE (187 aa).

Basic and acidic residues predominate over residues 1-15 (MKETKQEEMEVREDC). Residues 1-40 (MKETKQEEMEVREDCESVDSNLEATVEEMESTKGTSEDLE) form a disordered region.

This sequence belongs to the GrpE family. As to quaternary structure, homodimer.

The protein resides in the cytoplasm. Participates actively in the response to hyperosmotic and heat shock by preventing the aggregation of stress-denatured proteins, in association with DnaK and GrpE. It is the nucleotide exchange factor for DnaK and may function as a thermosensor. Unfolded proteins bind initially to DnaJ; upon interaction with the DnaJ-bound protein, DnaK hydrolyzes its bound ATP, resulting in the formation of a stable complex. GrpE releases ADP from DnaK; ATP binding to DnaK triggers the release of the substrate protein, thus completing the reaction cycle. Several rounds of ATP-dependent interactions between DnaJ, DnaK and GrpE are required for fully efficient folding. The protein is Protein GrpE of Alkaliphilus oremlandii (strain OhILAs) (Clostridium oremlandii (strain OhILAs)).